The sequence spans 155 residues: MHKNSKRNNNLRVSHTEANSVDAEKEKNESQNNFFELLPAEITFKIFSQLDIRSLCRASLTCRSWNDTIRNSDSLWKPHCMTVRAVCRREIDDDLESGYSWRVILLRNYQKSKVKHEWLSGRYSNICSPISLPEKIMYPMDADTWGEILEAELER.

A disordered region spans residues 1 to 27; it reads MHKNSKRNNNLRVSHTEANSVDAEKEK. Polar residues predominate over residues 7 to 19; sequence RNNNLRVSHTEAN. Residues 32 to 79 enclose the F-box domain; sequence NNFFELLPAEITFKIFSQLDIRSLCRASLTCRSWNDTIRNSDSLWKPH.

The polypeptide is F-box only protein 48 (FBXO48) (Homo sapiens (Human)).